Consider the following 121-residue polypeptide: Large ribosomal subunit protein uL18 (121 aa).

Belongs to the universal ribosomal protein uL18 family. In terms of assembly, part of the 50S ribosomal subunit; part of the 5S rRNA/L5/L18/L25 subcomplex. Contacts the 5S and 23S rRNAs.

Its function is as follows. This is one of the proteins that bind and probably mediate the attachment of the 5S RNA into the large ribosomal subunit, where it forms part of the central protuberance. This is Large ribosomal subunit protein uL18 from Ehrlichia canis (strain Jake).